Consider the following 461-residue polypeptide: Bifunctional protein GlmU (461 aa).

The segment at 1-235 is pyrophosphorylase; the sequence is MTDTRKQRAA…EDDLIGCDSK (235 aa). UDP-N-acetyl-alpha-D-glucosamine is bound by residues 13 to 16, K27, Q80, 85 to 86, 108 to 110, G146, E161, and N176; these read LAAG, GT, and YGD. D110 is a Mg(2+) binding site. The tract at residues 236-256 is linker; that stretch reads ADLAEAEAIFQQKRRRALMEA. Residues 257 to 461 form an N-acetyltransferase region; sequence GVTMVAPETV…ARTTDQNKKG (205 aa). The UDP-N-acetyl-alpha-D-glucosamine site is built by R322 and K340. The Proton acceptor role is filled by H352. Positions 355 and 366 each coordinate UDP-N-acetyl-alpha-D-glucosamine. Residues A369, 375–376, S394, S412, and R429 each bind acetyl-CoA; that span reads NY.

This sequence in the N-terminal section; belongs to the N-acetylglucosamine-1-phosphate uridyltransferase family. In the C-terminal section; belongs to the transferase hexapeptide repeat family. As to quaternary structure, homotrimer. Mg(2+) is required as a cofactor.

It localises to the cytoplasm. The enzyme catalyses alpha-D-glucosamine 1-phosphate + acetyl-CoA = N-acetyl-alpha-D-glucosamine 1-phosphate + CoA + H(+). It catalyses the reaction N-acetyl-alpha-D-glucosamine 1-phosphate + UTP + H(+) = UDP-N-acetyl-alpha-D-glucosamine + diphosphate. It participates in nucleotide-sugar biosynthesis; UDP-N-acetyl-alpha-D-glucosamine biosynthesis; N-acetyl-alpha-D-glucosamine 1-phosphate from alpha-D-glucosamine 6-phosphate (route II): step 2/2. The protein operates within nucleotide-sugar biosynthesis; UDP-N-acetyl-alpha-D-glucosamine biosynthesis; UDP-N-acetyl-alpha-D-glucosamine from N-acetyl-alpha-D-glucosamine 1-phosphate: step 1/1. It functions in the pathway bacterial outer membrane biogenesis; LPS lipid A biosynthesis. In terms of biological role, catalyzes the last two sequential reactions in the de novo biosynthetic pathway for UDP-N-acetylglucosamine (UDP-GlcNAc). The C-terminal domain catalyzes the transfer of acetyl group from acetyl coenzyme A to glucosamine-1-phosphate (GlcN-1-P) to produce N-acetylglucosamine-1-phosphate (GlcNAc-1-P), which is converted into UDP-GlcNAc by the transfer of uridine 5-monophosphate (from uridine 5-triphosphate), a reaction catalyzed by the N-terminal domain. The sequence is that of Bifunctional protein GlmU from Hyphomonas neptunium (strain ATCC 15444).